Consider the following 231-residue polypeptide: MASAVFEGTSLVNMFVRGCWVNGIRRLVVSRRGDEEEFFEIRTEWSDRSVLYLHRSLADLGRLWQRLRDAFPEDRPELVRAPLRQGLIAIKDAHDIETRLNEVEKLLKAIISMPRKYSRSEVVLTFFERSPLDQVLKNDNVHKIQCGFQSPVKISEIMRSNGFCLANTETIVIDHSIPNGKDQHGAVDPAEHLFEGGGELPAELEDGDDPAAYVTNLSYYHLVPFETDILD.

The region spanning 1 to 134 (MASAVFEGTS…TFFERSPLDQ (134 aa)) is the PX domain.

In Bos taurus (Bovine), this protein is PX domain-containing protein 1 (PXDC1).